The sequence spans 188 residues: PRA1 family protein 3 (188 aa).

Met1 carries the N-acetylmethionine modification. The Cytoplasmic segment spans residues 1-35 (MDVNIAPLRAWDDFFPGSDRFARPDFRDISKWNNR). 2 helical membrane-spanning segments follow: residues 36 to 56 (VVSNLLYYQTNYLVVAAMMIS) and 57 to 77 (VVGFLSPFNMILGGIVVVLVF). The Cytoplasmic segment spans residues 78-93 (TGFVWAAHNKDILRRM). The next 2 membrane-spanning stretches (helical) occupy residues 94–114 (KKQYPTAFVMVVMLASYFLIS) and 115–135 (LFGGVMVFVFGITFPLLLMFI). Residues 103 to 117 (MVVMLASYFLISLFG) are required for homodimer formation and heterodimer formation with ARL6IP1. Residues 136–188 (HASLRLRNLKNKLENKMEEIGLKRTPMGIVLDALEQQEETITKFSDYISKMKE) lie on the Cytoplasmic side of the membrane. The interval 136-188 (HASLRLRNLKNKLENKMEEIGLKRTPMGIVLDALEQQEETITKFSDYISKMKE) is targeting to endoplasmic reticulum membrane.

It belongs to the PRA1 family. As to quaternary structure, homodimer. Heterodimer with ARL6IP1. Forms multimers. Interacts with ARL6. Interacts with prenylated RAB1A and RAB3A. Interacts with SLC1A1/EAAC1. Interacts with RTN2 (via first transmembrane domain). Does not interact with VAMP1, VAMP2 or VAMP3.

It localises to the endoplasmic reticulum membrane. The protein resides in the cell membrane. It is found in the cytoplasm. The protein localises to the cytoskeleton. In terms of biological role, regulates intracellular concentrations of taurine and glutamate. Negatively modulates SLC1A1/EAAC1 glutamate transport activity by decreasing its affinity for glutamate in a PKC activity-dependent manner. Plays a role in the retention of SLC1A1/EAAC1 in the endoplasmic reticulum. In Bos taurus (Bovine), this protein is PRA1 family protein 3 (ARL6IP5).